Consider the following 173-residue polypeptide: uncharacterized protein (173 aa).

A run of 4 helical transmembrane segments spans residues 13 to 35 (LQVI…PLLS), 50 to 72 (IIFI…FLGL), 107 to 129 (NYLI…KYLL), and 139 to 161 (GYLI…RLIL).

It localises to the cell membrane. This is an uncharacterized protein from Rickettsia prowazekii (strain Madrid E).